A 40-amino-acid polypeptide reads, in one-letter code: Beta-glucosidase 1 (40 aa).

The catalysed reaction is Hydrolysis of terminal, non-reducing beta-D-glucosyl residues with release of beta-D-glucose.. The protein is Beta-glucosidase 1 of Passalora fulva (Tomato leaf mold).